The following is an 80-amino-acid chain: Acyl carrier protein (80 aa).

In terms of domain architecture, Carrier spans 4-79 (EEILQKVCSI…DAVKFIEEKK (76 aa)). Position 39 is an O-(pantetheine 4'-phosphoryl)serine (serine 39).

This sequence belongs to the acyl carrier protein (ACP) family. 4'-phosphopantetheine is transferred from CoA to a specific serine of apo-ACP by AcpS. This modification is essential for activity because fatty acids are bound in thioester linkage to the sulfhydryl of the prosthetic group.

The protein resides in the cytoplasm. It participates in lipid metabolism; fatty acid biosynthesis. In terms of biological role, carrier of the growing fatty acid chain in fatty acid biosynthesis. This is Acyl carrier protein from Prochlorococcus marinus subsp. pastoris (strain CCMP1986 / NIES-2087 / MED4).